A 214-amino-acid polypeptide reads, in one-letter code: MKKILVIDDHPAVMEGTKTILETDSNLSVDCLSPEPSEQFIKQHDFSSYDLILMDLNLGGEVNGMELSKQILQENPHCKIIVYTGYEVEDYFEEAIRAGLHGAISKTESKEKITQYIYHVLNGEILVDFAYFKQLMTQQKTKPAPSSQKEQDVLTPRECLILQEVEKGFTNQEIADALHLSKRSIEYSLTSIFNKLNVGSRTEAVLIAKSDGVL.

Residues 3–121 (KILVIDDHPA…KITQYIYHVL (119 aa)) form the Response regulatory domain. D55 bears the 4-aspartylphosphate mark. In terms of domain architecture, HTH luxR-type spans 147 to 212 (SQKEQDVLTP…EAVLIAKSDG (66 aa)). Residues 171–190 (NQEIADALHLSKRSIEYSLT) constitute a DNA-binding region (H-T-H motif).

In terms of processing, phosphorylated by ComP.

It localises to the cytoplasm. Response regulator in the two-component regulatory system ComP/ComA involved in a major quorum response pathway that regulates the development of genetic competence. Regulates directly the expression of over 20 genes, including genes of the srfA operon, degQ, rapA, rapC, rapE, rapF, etc. Regulates indirectly, through the regulation of comK transcription, the expression of late competence genes. The chain is Transcriptional regulatory protein ComA (comA) from Bacillus subtilis (strain 168).